Consider the following 449-residue polypeptide: MEGAWDVAFVLLHVWMSIVAGLIVLPAMFGVSLGFTDIYIKLLVKTLEWATLRIQRGQKEQPTLPLQLANGIIEKDDGSMEEEIVELRRSHPKNLAEGNFTLCDAFYFCKKGIENIVEDQVTQRFSSEELASWNLLTRTNNNFRYISVRLTIIWGLGVFVRYCVLLPLRITLAVIGLSWLVIGTTLVGFLPNSKVKNWLSDLVHITCYRICARGLSATIRYHNKENRPKKGGICVANHTSPIDIVILANDGCYAMVGQVHGGLMGVIQRSMVRSCPHVWFERSEMKDRHAVAKRLKDHISDKTKLPILIFPEGTCINNTSVMMFKKGSFEFGGTIYPVAIKYDPRFGDAFWNSAKYNMVSYILRMMTSWAIVCNVWYLPPMTQQDGEDAVHFANRVKSAIAHQGGLVDLSWDGGLKRSKVKESFKEEQQKMYSSMIVGLDSHEATVGPA.

Helical transmembrane passes span 9-29, 146-166, and 170-190; these read FVLLHVWMSIVAGLIVLPAMF, ISVRLTIIWGLGVFVRYCVLL, and ITLAVIGLSWLVIGTTLVGFL. The HXXXXD motif signature appears at 238–243; it reads HTSPID. The chain crosses the membrane as a helical span at residues 358–378; the sequence is MVSYILRMMTSWAIVCNVWYL.

This sequence belongs to the 1-acyl-sn-glycerol-3-phosphate acyltransferase family.

It is found in the endoplasmic reticulum membrane. It catalyses the reaction sn-glycerol 3-phosphate + an acyl-CoA = a 1-acyl-sn-glycero-3-phosphate + CoA. The catalysed reaction is a 1-acyl-sn-glycero-3-phosphate + an acyl-CoA = a 1,2-diacyl-sn-glycero-3-phosphate + CoA. The enzyme catalyses dodecanoyl-CoA + sn-glycerol 3-phosphate = 1-dodecanoyl-sn-glycerol 3-phosphate + CoA. It carries out the reaction sn-glycerol 3-phosphate + hexadecanoyl-CoA = 1-hexadecanoyl-sn-glycero-3-phosphate + CoA. It catalyses the reaction sn-glycerol 3-phosphate + (9Z)-octadecenoyl-CoA = 1-(9Z-octadecenoyl)-sn-glycero-3-phosphate + CoA. The catalysed reaction is (9Z,12Z)-octadecadienoyl-CoA + sn-glycerol 3-phosphate = 1-(9Z,12Z)-octadecadienoyl-sn-glycero-3-phosphate + CoA. The enzyme catalyses 1-tetradecanoyl-sn-glycerol 3-phosphate + (9Z)-octadecenoyl-CoA = 1-tetradecanoyl-2-(9Z)-octadecenoyl-sn-glycero-3-phosphate + CoA. It carries out the reaction 1-hexadecanoyl-sn-glycero-3-phosphate + (9Z)-octadecenoyl-CoA = 1-hexadecanoyl-2-(9Z-octadecenoyl)-sn-glycero-3-phosphate + CoA. It catalyses the reaction 1-(9Z-octadecenoyl)-sn-glycero-3-phosphate + (9Z)-octadecenoyl-CoA = 1,2-di-(9Z-octadecenoyl)-sn-glycero-3-phosphate + CoA. The catalysed reaction is 1-(6Z,9Z,12Z-octadecatrienoyl)-sn-glycero-3-phosphate + (9Z)-octadecenoyl-CoA = (6Z,9Z,12Z)-octadecatrienoyl-2-(9Z)-octadecenoyl-sn-glycero-3-phosphate + CoA. The enzyme catalyses 1-(9Z,12Z,15Z)-octadecatrienoyl-sn-glycero-3-phosphate + (9Z)-octadecenoyl-CoA = 1-(9Z,12Z,15Z)-octadecatrienoyl-2-(9Z)-octadecenoyl-sn-glycero-3-phosphate + CoA. It carries out the reaction 1-(9Z-octadecenoyl)-sn-glycero-3-phosphate + tetradecanoyl-CoA = 1-(9Z)-octadecenoyl-2-tetradecanoyl-sn-glycero-3-phosphate + CoA. It catalyses the reaction 1-(9Z-octadecenoyl)-sn-glycero-3-phosphate + hexadecanoyl-CoA = 1-(9Z)-octadecenoyl-2-hexadecanoyl-sn-glycero-3-phosphate + CoA. The catalysed reaction is 1-(9Z-octadecenoyl)-sn-glycero-3-phosphate + octadecanoyl-CoA = 1-(9Z-octadecenoyl)-2-octadecanoyl-sn-glycero-3-phosphate + CoA. The enzyme catalyses 1-(9Z-octadecenoyl)-sn-glycero-3-phosphate + (9Z,12Z)-octadecadienoyl-CoA = 1-(9Z)-octadecenoyl-2-(9Z,12Z)-octadecadienoyl-sn-glycero-3-phosphate + CoA. It carries out the reaction 1-(5Z,8Z,11Z,14Z-eicosatetraenoyl)-sn-glycero-3-phosphate + (9Z)-octadecenoyl-CoA = 1-(5Z,8Z,11Z,14Z)-eicosatetraenoyl-2-(9Z)-octadecenoyl-sn-glycero-3-phosphate + CoA. Its pathway is glycerolipid metabolism; triacylglycerol biosynthesis. It functions in the pathway phospholipid metabolism; CDP-diacylglycerol biosynthesis; CDP-diacylglycerol from sn-glycerol 3-phosphate: step 1/3. Converts glycerol-3-phosphate to 1-acyl-sn-glycerol-3-phosphate (lysophosphatidic acid or LPA) by incorporating an acyl moiety at the sn-1 position of the glycerol backbone. Also converts LPA into 1,2-diacyl-sn-glycerol-3-phosphate (phosphatidic acid or PA) by incorporating an acyl moiety at the sn-2 position of the glycerol backbone. Protects cells against lipotoxicity. The polypeptide is Glycerol-3-phosphate acyltransferase 3 (Danio rerio (Zebrafish)).